Here is a 107-residue protein sequence, read N- to C-terminus: Probable insulin-like peptide beta-type 3 (107 aa).

Residues Met1–Ser19 form the signal peptide. The propeptide occupies Leu20–Arg55. 4 disulfides stabilise this stretch: Cys62–Cys90, Cys74–Cys103, Cys78–Cys104, and Cys89–Cys94.

It belongs to the insulin family.

It localises to the secreted. This Caenorhabditis elegans protein is Probable insulin-like peptide beta-type 3 (ins-3).